Here is a 215-residue protein sequence, read N- to C-terminus: Cytochrome b6 (215 aa).

Residues 32 to 52 (IFYCLGGITLTCFLVQVATGF) form a helical membrane-spanning segment. A heme c-binding site is contributed by C35. H86 and H100 together coordinate heme b. 3 helical membrane-spanning segments follow: residues 90-110 (ASMM…TGGF), 116-136 (LTWV…VTGY), and 186-206 (LHTF…FLMI). H187 and H202 together coordinate heme b.

It belongs to the cytochrome b family. PetB subfamily. The 4 large subunits of the cytochrome b6-f complex are cytochrome b6, subunit IV (17 kDa polypeptide, PetD), cytochrome f and the Rieske protein, while the 4 small subunits are PetG, PetL, PetM and PetN. The complex functions as a dimer. The cofactor is heme b. Heme c is required as a cofactor.

The protein localises to the plastid. It is found in the chloroplast thylakoid membrane. Functionally, component of the cytochrome b6-f complex, which mediates electron transfer between photosystem II (PSII) and photosystem I (PSI), cyclic electron flow around PSI, and state transitions. The polypeptide is Cytochrome b6 (Oenothera elata subsp. hookeri (Hooker's evening primrose)).